Reading from the N-terminus, the 89-residue chain is Small ribosomal subunit protein uS15 (89 aa).

Belongs to the universal ribosomal protein uS15 family. Part of the 30S ribosomal subunit. Forms a bridge to the 50S subunit in the 70S ribosome, contacting the 23S rRNA.

One of the primary rRNA binding proteins, it binds directly to 16S rRNA where it helps nucleate assembly of the platform of the 30S subunit by binding and bridging several RNA helices of the 16S rRNA. Functionally, forms an intersubunit bridge (bridge B4) with the 23S rRNA of the 50S subunit in the ribosome. This Jannaschia sp. (strain CCS1) protein is Small ribosomal subunit protein uS15.